A 224-amino-acid chain; its full sequence is Protein HLJ1 (224 aa).

The 70-residue stretch at 18–87 (DKHEFYEILK…RSIYDRIGRD (70 aa)) folds into the J domain. The span at 84–93 (IGRDPDDRQM) shows a compositional bias: basic and acidic residues. Residues 84 to 107 (IGRDPDDRQMPSRGAASGFRGSAG) form a disordered region. A Phosphoserine modification is found at serine 109. Residues 173-192 (NRGGSPFMRQQPRSRQQQQQ) form a disordered region. Low complexity predominate over residues 181–192 (RQQPRSRQQQQQ).

The chain is Protein HLJ1 (HLJ1) from Saccharomyces cerevisiae (strain ATCC 204508 / S288c) (Baker's yeast).